We begin with the raw amino-acid sequence, 92 residues long: Nodulation protein F (92 aa).

A Carrier domain is found at 4–88 (QLTVEIIAAI…DVVEAVRGLI (85 aa)). Position 45 is an O-(pantetheine 4'-phosphoryl)serine (serine 45).

Post-translationally, 4'-phosphopantetheine is transferred from CoA to a specific serine of apo-NodF.

Functionally, proposed to synthesize nod factor fatty acyl chain. Involved in trans-2,trans-4,trans-6,cis-11-octadecatetraenoic acid biosynthesis. The sequence is that of Nodulation protein F (nodF) from Rhizobium leguminosarum bv. trifolii.